Consider the following 288-residue polypeptide: Short chain aldehyde dehydrogenase 1 (288 aa).

Residues 26–28 (SGI), Asp47, 72–73 (DV), and 99–101 (NAG) each bind NAD(+). Catalysis depends on Ser153, which acts as the Proton donor. 2 residues coordinate substrate: Ser153 and Tyr166. Positions 166, 170, and 201 each coordinate NAD(+). The active-site Proton acceptor is the Tyr166. Catalysis depends on Lys170, which acts as the Proton donor/acceptor.

The protein belongs to the short-chain dehydrogenases/reductases (SDR) family. In terms of assembly, homodimer. In terms of tissue distribution, expressed in mature seeds.

The enzyme catalyses 4,5,8-trihydroxycasbene + 2 NAD(+) = jolkinol C + 2 NADH + 2 H(+). It catalyses the reaction a secondary alcohol + NAD(+) = a ketone + NADH + H(+). It carries out the reaction a primary alcohol + NAD(+) = an aldehyde + NADH + H(+). The protein operates within secondary metabolite biosynthesis; terpenoid biosynthesis. Its function is as follows. Involved in the biosynthesis of macrocyclic lathyrane type diterpenoids (also called Euphorbia factors) natural products, including the cyclization route from casbene to jolkinol C, a precursor for ingenol mebutate that is used to treat actinic keratosis, a precancerous skin condition. Catalyzes the conversion of 4,5,8-trihydroxycasbene into jolkinol C in presence of NAD. Also mediates the formation of casbene dione derivative and 4-ketocasbene from 4-hydroxy-8-ketocasbene and 4-hydroxycasbene, respectively. Together with CYP71D445, triggers the biosynthesis of 8-ketocasbene from 8-hydroxycasbene. The sequence is that of Short chain aldehyde dehydrogenase 1 from Euphorbia lathyris (Caper spurge).